The primary structure comprises 65 residues: Large ribosomal subunit protein uL29 (65 aa).

The tract at residues 30–49 is disordered; the sequence is ERSSVAMGGAPSSPGKMRSI.

Belongs to the universal ribosomal protein uL29 family.

This chain is Large ribosomal subunit protein uL29, found in Picrophilus torridus (strain ATCC 700027 / DSM 9790 / JCM 10055 / NBRC 100828 / KAW 2/3).